The sequence spans 137 residues: Large ribosomal subunit protein bL12 (137 aa).

It belongs to the bacterial ribosomal protein bL12 family. Homodimer. Part of the ribosomal stalk of the 50S ribosomal subunit. Forms a multimeric L10(L12)X complex, where L10 forms an elongated spine to which 2 to 4 L12 dimers bind in a sequential fashion. Binds GTP-bound translation factors.

Functionally, forms part of the ribosomal stalk which helps the ribosome interact with GTP-bound translation factors. Is thus essential for accurate translation. The polypeptide is Large ribosomal subunit protein bL12 (Gloeobacter violaceus (strain ATCC 29082 / PCC 7421)).